A 243-amino-acid chain; its full sequence is Type III pantothenate kinase (243 aa).

An ATP-binding site is contributed by 6–13 (DIGNTNLK). Residue 101-104 (GSDI) participates in substrate binding. Aspartate 103 serves as the catalytic Proton acceptor. ATP is bound at residue threonine 125. Threonine 176 serves as a coordination point for substrate.

The protein belongs to the type III pantothenate kinase family. As to quaternary structure, homodimer. It depends on NH4(+) as a cofactor. Requires K(+) as cofactor.

Its subcellular location is the cytoplasm. It carries out the reaction (R)-pantothenate + ATP = (R)-4'-phosphopantothenate + ADP + H(+). It participates in cofactor biosynthesis; coenzyme A biosynthesis; CoA from (R)-pantothenate: step 1/5. Catalyzes the phosphorylation of pantothenate (Pan), the first step in CoA biosynthesis. This chain is Type III pantothenate kinase, found in Mycoplasma mobile (strain ATCC 43663 / 163K / NCTC 11711) (Mesomycoplasma mobile).